Consider the following 530-residue polypeptide: Asc-type amino acid transporter 1 (530 aa).

The interval 1-36 (MRRDSDMASHIQQPGGHGNPGPAPSPSPGPGPGPGA) is disordered. Over residues 21-33 (GPAPSPSPGPGPG) the composition is skewed to pro residues. The next 10 helical transmembrane spans lie at 46 to 66 (IGLV…GIFI), 78 to 98 (VGLA…GSLC), 119 to 139 (IFGG…MYPT), 192 to 212 (IQVI…TVGF), 274 to 294 (AIFI…VAYF), 316 to 336 (LLGY…FGGI), 368 to 388 (CTPI…MLVG), 394 to 414 (INYV…GLLV), 430 to 450 (LLVP…SFIS), and 454 to 474 (VCGV…LGVF). Residues 508–530 (EEENGPMGQPSPLPITDKPLKTQ) form a disordered region.

Belongs to the amino acid-polyamine-organocation (APC) superfamily. Disulfide-linked heterodimer with the amino acid transport protein SLC3A2/4F2hc.

It localises to the cell membrane. It catalyses the reaction L-alanine(in) + glycine(out) = L-alanine(out) + glycine(in). The enzyme catalyses L-serine(out) + L-alanine(in) = L-serine(in) + L-alanine(out). The catalysed reaction is L-threonine(out) + L-alanine(in) = L-threonine(in) + L-alanine(out). It carries out the reaction L-cysteine(out) + L-alanine(in) = L-cysteine(in) + L-alanine(out). It catalyses the reaction 2-aminoisobutanoate(out) + L-alanine(in) = 2-aminoisobutanoate(in) + L-alanine(out). The enzyme catalyses D-serine(out) + L-alanine(in) = D-serine(in) + L-alanine(out). The catalysed reaction is D-alanine(out) + L-alanine(in) = D-alanine(in) + L-alanine(out). It carries out the reaction L-valine(out) + L-alanine(in) = L-valine(in) + L-alanine(out). It catalyses the reaction L-methionine(out) + L-alanine(in) = L-methionine(in) + L-alanine(out). The enzyme catalyses beta-alanine(out) + L-alanine(in) = beta-alanine(in) + L-alanine(out). The catalysed reaction is D-cysteine(out) + L-alanine(in) = D-cysteine(in) + L-alanine(out). It carries out the reaction D-threonine(out) + L-alanine(in) = D-threonine(in) + L-alanine(out). It catalyses the reaction D-isoleucine(out) + D-serine(in) = D-isoleucine(in) + D-serine(out). The enzyme catalyses D-serine(in) = D-serine(out). Associates with SLC3A2/4F2hc to form a functional heterodimeric complex that translocates small neutral L- and D-amino acids across the plasma membrane. Preferentially mediates exchange transport, but can also operate via facilitated diffusion. Acts as a major transporter for glycine, L- and D-serine in the central nervous system. At the spinal cord and brainstem regulates glycine metabolism and glycinergic inhibitory neurotransmission by providing for glycine de novo synthesis from L-serine and glycine recycling from astrocytes to glycinergic motor neurons. At Schaffer collateral-CA1 synapses mediates D-serine and glycine release that modulates post-synaptic activation of NMDA receptors and excitatory glutamatergic transmission. May regulate D-serine release from mesenchymal progenitors located in developing subcutaneous adipose tissue, favoring white adipocyte over thermogenic beige adipocyte lineage commitment. This chain is Asc-type amino acid transporter 1 (Slc7a10), found in Rattus norvegicus (Rat).